The primary structure comprises 98 residues: NADH-ubiquinone oxidoreductase chain 4L (98 aa).

Transmembrane regions (helical) follow at residues 1–21, 29–49, and 59–79; these read MTTMFLNLLLAFTVALVGVFI, TLLCLEGMMLSIFIMVALILL, and LPLILLVFSACEAGVGLALLV.

Belongs to the complex I subunit 4L family. As to quaternary structure, core subunit of respiratory chain NADH dehydrogenase (Complex I) which is composed of 45 different subunits.

Its subcellular location is the mitochondrion inner membrane. The enzyme catalyses a ubiquinone + NADH + 5 H(+)(in) = a ubiquinol + NAD(+) + 4 H(+)(out). Core subunit of the mitochondrial membrane respiratory chain NADH dehydrogenase (Complex I) which catalyzes electron transfer from NADH through the respiratory chain, using ubiquinone as an electron acceptor. Part of the enzyme membrane arm which is embedded in the lipid bilayer and involved in proton translocation. The protein is NADH-ubiquinone oxidoreductase chain 4L (MT-ND4L) of Ornithorhynchus anatinus (Duckbill platypus).